The following is a 239-amino-acid chain: Purine nucleoside phosphorylase DeoD-type (239 aa).

An a purine D-ribonucleoside-binding site is contributed by His-5. Phosphate contacts are provided by residues Gly-21, Arg-25, Arg-44, and 88–91 (RVGS). A purine D-ribonucleoside is bound by residues 180-182 (EME) and 204-205 (SD). The active-site Proton donor is the Asp-205.

It belongs to the PNP/UDP phosphorylase family. As to quaternary structure, homohexamer; trimer of homodimers.

The enzyme catalyses a purine D-ribonucleoside + phosphate = a purine nucleobase + alpha-D-ribose 1-phosphate. The catalysed reaction is a purine 2'-deoxy-D-ribonucleoside + phosphate = a purine nucleobase + 2-deoxy-alpha-D-ribose 1-phosphate. Catalyzes the reversible phosphorolytic breakdown of the N-glycosidic bond in the beta-(deoxy)ribonucleoside molecules, with the formation of the corresponding free purine bases and pentose-1-phosphate. This chain is Purine nucleoside phosphorylase DeoD-type, found in Myxococcus xanthus (strain DK1622).